A 173-amino-acid chain; its full sequence is Superoxide dismutase [Cu-Zn] (173 aa).

The N-terminal stretch at 1-22 (MNKAKTLLFTALAFGLSHQALA) is a signal peptide. Residues His67, His69, and His92 each coordinate Cu cation. Cys74 and Cys169 are oxidised to a cystine. 4 residues coordinate Zn(2+): His92, His101, His110, and Asp113. Cu cation is bound at residue His147.

It belongs to the Cu-Zn superoxide dismutase family. As to quaternary structure, homodimer. Requires Cu cation as cofactor. The cofactor is Zn(2+).

Its subcellular location is the periplasm. It catalyses the reaction 2 superoxide + 2 H(+) = H2O2 + O2. Functionally, destroys radicals which are normally produced within the cells and which are toxic to biological systems. The sequence is that of Superoxide dismutase [Cu-Zn] (sodC) from Photobacterium leiognathi.